We begin with the raw amino-acid sequence, 573 residues long: 2-succinyl-5-enolpyruvyl-6-hydroxy-3-cyclohexene-1-carboxylate synthase (573 aa).

Belongs to the TPP enzyme family. MenD subfamily. As to quaternary structure, homodimer. Requires Mg(2+) as cofactor. The cofactor is Mn(2+). Thiamine diphosphate serves as cofactor.

It carries out the reaction isochorismate + 2-oxoglutarate + H(+) = 5-enolpyruvoyl-6-hydroxy-2-succinyl-cyclohex-3-ene-1-carboxylate + CO2. It participates in quinol/quinone metabolism; 1,4-dihydroxy-2-naphthoate biosynthesis; 1,4-dihydroxy-2-naphthoate from chorismate: step 2/7. The protein operates within quinol/quinone metabolism; menaquinone biosynthesis. Functionally, catalyzes the thiamine diphosphate-dependent decarboxylation of 2-oxoglutarate and the subsequent addition of the resulting succinic semialdehyde-thiamine pyrophosphate anion to isochorismate to yield 2-succinyl-5-enolpyruvyl-6-hydroxy-3-cyclohexene-1-carboxylate (SEPHCHC). This chain is 2-succinyl-5-enolpyruvyl-6-hydroxy-3-cyclohexene-1-carboxylate synthase, found in Shewanella putrefaciens (strain CN-32 / ATCC BAA-453).